The following is a 67-amino-acid chain: Large ribosomal subunit protein uL30 (67 aa).

This sequence belongs to the universal ribosomal protein uL30 family. Part of the 50S ribosomal subunit.

The protein is Large ribosomal subunit protein uL30 of Hamiltonella defensa subsp. Acyrthosiphon pisum (strain 5AT).